The primary structure comprises 402 residues: MAFSQAVSGLNAAATNLDVIGNNIANSATYGFKSGTASFADMFAGSKVGLGVKVAGITQDFTDGTTTNTGRGLDVAISQNGFFRLVDSNGSVFYSRNGQFKLDENRNLVNMQGLQLTGYPATGTPPTIQQGANPTNISIPNTLMAAKTTTTASMQINLNSSDPLPTVTPFSASNADSYNKKGSVTVFDSQGNAHDMSVYFVKTGDNNWQVYTQDSSDPNSIAKTATTLEFNANGTLVDGAMANNIATGAINGAEPATFSLSFLNSMQQNTGANNIVATTQNGYKPGDLVSYQINDDGTVVGNYSNEQTQLLGQIVLANFANNEGLASEGDNVWSATQSSGVALLGTAGTGNFGTLTNGALEASNVDLSKELVNMIVAQRNYQSNAQTIKTQDQILNTLVNLR.

It belongs to the flagella basal body rod proteins family.

The protein localises to the bacterial flagellum basal body. The sequence is that of Flagellar hook protein FlgE (flgE) from Escherichia coli (strain K12).